The chain runs to 306 residues: MVAHAATCLDGKSLAQSIERQLADHVRTFQAQWGRSPGLAVLRVGNDPASAVYVRAKEQACSRVGIQSFGAHLPATITEAALLAKITELNQDERVDGILLQLPLPPHLDPRPLLYAIHPDKDVDGLHPENLGRLVRDEPGLRSCTPAGVMQLLAAYGIDVVGRSAVVVGRSILVGKPLALMLLSANATVTIAHSRSRELASITRSAEILVTAMGQPRRITADMIRPGAVVIDVGINRIQRPDGKSSLWGDVDYEAARAVASYITPVPGGVGPMTVAMLLHNTVWSYCRRHNWQQPLLSLTSMPPAP.

NADP(+)-binding positions include 169–171 (GRS), serine 194, and isoleucine 235.

This sequence belongs to the tetrahydrofolate dehydrogenase/cyclohydrolase family. In terms of assembly, homodimer.

It carries out the reaction (6R)-5,10-methylene-5,6,7,8-tetrahydrofolate + NADP(+) = (6R)-5,10-methenyltetrahydrofolate + NADPH. It catalyses the reaction (6R)-5,10-methenyltetrahydrofolate + H2O = (6R)-10-formyltetrahydrofolate + H(+). It functions in the pathway one-carbon metabolism; tetrahydrofolate interconversion. Functionally, catalyzes the oxidation of 5,10-methylenetetrahydrofolate to 5,10-methenyltetrahydrofolate and then the hydrolysis of 5,10-methenyltetrahydrofolate to 10-formyltetrahydrofolate. The polypeptide is Bifunctional protein FolD (Thermosynechococcus vestitus (strain NIES-2133 / IAM M-273 / BP-1)).